The sequence spans 341 residues: MDTARIAVVGAGVVGLSTAVCISKLVPRCSVTIISDKFTPDTTSDVAAGMLIPHTYPDTPIHTQKQWFRETFNHLFAIANSAEAGDAGVHLVSGWQIFQSTPTEEVPFWADVVLGFRKMTEAELKKFPQYVFGQAFTTLKCECPAYLPWLEKRIKGSGGWTLTRRIEDLWELHPSFDIVVNCSGLGSRQLAGDSKIFPVRGQVLQVQAPWVEHFIRDGSGLTYIYPGTSHVTLGGTRQKGDWNLSPDAENSREILSRCCALEPSLHGACNIREKVGLRPYRPGVRLQTELLARDGQRLPVVHHYGHGSGGISVHWGTALEAARLVSECVHALRTPIPKSNL.

Residues D36, K37, T43, S44, M50, G307, I311, and S312 each contribute to the FAD site. A Microbody targeting signal motif is present at residues 339–341 (SNL).

This sequence belongs to the DAMOX/DASOX family. Monomer. Interacts with PEX5; the interaction is direct and required for localization of DDO to the peroxisome. Interacts with DAOA; the interaction is direct and increases the degradation rate of DDO. FAD serves as cofactor. In terms of processing, may be S-nitrosylated. As to expression, expressed in epithelial cells of the proximal nephron tubules in the renal cortex (at protein level). In the brain, expressed in the frontal, temporal, and occipital lobes of the cortex, hippocampus, striatum, diencephalon, brainstem, cerebellum, spinal cord, plexus choroiderus and ependyma (at protein level). Expression is increased in the prefrontal cortex of schizophrenic patients. Levels are normal in the superior frontal gyrus of patients with Alzheimer's disease.

It localises to the peroxisome matrix. The protein localises to the cytoplasm. Its subcellular location is the cytosol. The enzyme catalyses D-aspartate + O2 + H2O = oxaloacetate + H2O2 + NH4(+). It carries out the reaction D-glutamate + O2 + H2O = H2O2 + 2-oxoglutarate + NH4(+). Inhibited by the benzodiazepine olanzapine. Inhibited by aminooxyacetic acid, thiolactomycin, malonate and meso-tartrate. Clozapine, haloperidol and chlorpromazine have no effect on activity. Not inhibited by sodium, potassium, magnesium, iron, calcium, cobalt, copper, nickel, manganese or zinc ions. Not inhibited by AMP, ADP, ATP, or cAMP. Not inhibited by pyridoxal 5'-phosphate. Functionally, selectively catalyzes the oxidative deamination of acidic amino acids. Suppresses the level of D-aspartate in the brain, an amino acid that can act as an agonist for glutamate receptors. Protects the organism from the toxicity of D-amino acids. May also function in the intestine. The sequence is that of D-aspartate oxidase (DDO) from Homo sapiens (Human).